The primary structure comprises 521 residues: UDP-N-acetylmuramate--L-alanine ligase (521 aa).

ATP is bound at residue 136–142 (GAHGKTT).

This sequence belongs to the MurCDEF family.

It localises to the cytoplasm. It catalyses the reaction UDP-N-acetyl-alpha-D-muramate + L-alanine + ATP = UDP-N-acetyl-alpha-D-muramoyl-L-alanine + ADP + phosphate + H(+). It participates in cell wall biogenesis; peptidoglycan biosynthesis. Cell wall formation. The sequence is that of UDP-N-acetylmuramate--L-alanine ligase from Bifidobacterium adolescentis (strain ATCC 15703 / DSM 20083 / NCTC 11814 / E194a).